Consider the following 206-residue polypeptide: uncharacterized protein (206 aa).

Positions 128–206 (KRYNVQKPKV…DQSWLDELLR (79 aa)) are disordered. Over residues 171–181 (YISSNHSSMHI) the composition is skewed to polar residues.

The protein resides in the cytoplasm. Its subcellular location is the nucleus. This is an uncharacterized protein from Schizosaccharomyces pombe (strain 972 / ATCC 24843) (Fission yeast).